The chain runs to 130 residues: Lipoprotein LpqS (130 aa).

Residues Met1 to Ala23 form the signal peptide. Residue Cys24 is the site of N-palmitoyl cysteine attachment. The S-diacylglycerol cysteine moiety is linked to residue Cys24.

It localises to the cell membrane. In terms of biological role, may play an essential role in M.tuberculosis replication and survival inside the host cell. The protein is Lipoprotein LpqS of Mycobacterium tuberculosis (strain ATCC 25618 / H37Rv).